The sequence spans 236 residues: Ubiquinone biosynthesis O-methyltransferase (236 aa).

The S-adenosyl-L-methionine site is built by arginine 36, glycine 60, aspartate 81, and leucine 123.

The protein belongs to the methyltransferase superfamily. UbiG/COQ3 family.

It carries out the reaction a 3-demethylubiquinol + S-adenosyl-L-methionine = a ubiquinol + S-adenosyl-L-homocysteine + H(+). The catalysed reaction is a 3-(all-trans-polyprenyl)benzene-1,2-diol + S-adenosyl-L-methionine = a 2-methoxy-6-(all-trans-polyprenyl)phenol + S-adenosyl-L-homocysteine + H(+). It participates in cofactor biosynthesis; ubiquinone biosynthesis. Its function is as follows. O-methyltransferase that catalyzes the 2 O-methylation steps in the ubiquinone biosynthetic pathway. The polypeptide is Ubiquinone biosynthesis O-methyltransferase (Rickettsia canadensis (strain McKiel)).